Reading from the N-terminus, the 203-residue chain is Urease accessory protein UreG (203 aa).

11-18 (GPVGSGKT) lines the GTP pocket.

The protein belongs to the SIMIBI class G3E GTPase family. UreG subfamily. As to quaternary structure, homodimer. UreD, UreF and UreG form a complex that acts as a GTP-hydrolysis-dependent molecular chaperone, activating the urease apoprotein by helping to assemble the nickel containing metallocenter of UreC. The UreE protein probably delivers the nickel.

The protein localises to the cytoplasm. Functionally, facilitates the functional incorporation of the urease nickel metallocenter. This process requires GTP hydrolysis, probably effectuated by UreG. The chain is Urease accessory protein UreG from Prochlorococcus marinus (strain MIT 9301).